We begin with the raw amino-acid sequence, 329 residues long: MLESMYYEFFFIFPKERELFESFLLDTTHLALEESSLENLKAFDDKETIEFVSQSSWRYFATHDPLKENLKEKPPHLKNFVILRSEKNLSDSLFPALEAFCLNLKQSLQSEFDFFYLSRNLASKDWLEAYKQAVLPVRCAKFYIHPSWHQKPSHAAIDDCIMIDPALAFGSGHHESTSMCLELLSSLDLKRKNALDVGCGSGILSIALKKQGVSALTACDTDSLAVEETLKNFSLNQIPLLAQDKVIYGSTQKIEGRFDIIVANLVADVIKSLYSEFVRLCNHTLILSGILETHLNSVLQIYYNGFEVLEQRQRNEWVALKLLKKQSIN.

Residues Thr-177, Gly-198, Asp-220, and Asn-264 each contribute to the S-adenosyl-L-methionine site.

Belongs to the methyltransferase superfamily. PrmA family.

Its subcellular location is the cytoplasm. The catalysed reaction is L-lysyl-[protein] + 3 S-adenosyl-L-methionine = N(6),N(6),N(6)-trimethyl-L-lysyl-[protein] + 3 S-adenosyl-L-homocysteine + 3 H(+). Functionally, methylates ribosomal protein L11. The sequence is that of Ribosomal protein L11 methyltransferase from Helicobacter pylori (strain J99 / ATCC 700824) (Campylobacter pylori J99).